Reading from the N-terminus, the 317-residue chain is Tetraspanin-15 (317 aa).

Residues 1 to 43 form a disordered region; sequence MADNAQVVPVEEPAATATATATATATTEPEAKSSDQMESQSDN. Topologically, residues 1–60 are cytoplasmic; it reads MADNAQVVPVEEPAATATATATATATTEPEAKSSDQMESQSDNKPPMGTLMALVNILAAG. Residues 7 to 28 are compositionally biased toward low complexity; that stretch reads VVPVEEPAATATATATATATTE. A helical transmembrane segment spans residues 61-81; the sequence is VLPIFTFVLSLTLLGYAVWLL. Over 82–96 the chain is Extracellular; that stretch reads YMRSYDCEDILGLPR. The helical transmembrane segment at 97-117 threads the bilayer; it reads VQTLASVGLLAVFVVSNAALF. The Cytoplasmic segment spans residues 118–126; it reads LRRKFPMPA. A helical membrane pass occupies residues 127–147; the sequence is LVVMVVVLLLMLFIGLAYAGV. Residues 148 to 287 lie on the Extracellular side of the membrane; it reads NEMQSRRFPA…IRSVRRKWWQ (140 aa). The N-linked (GlcNAc...) asparagine glycan is linked to asparagine 224. Residues 288–308 traverse the membrane as a helical segment; the sequence is LGIFLIVISILLLMSHLLIFL. Residues 309–317 lie on the Cytoplasmic side of the membrane; it reads ATFWERFKG.

The protein belongs to the tetraspanin (TM4SF) family.

It is found in the membrane. Functionally, may be involved in the regulation of cell differentiation. This chain is Tetraspanin-15 (TET15), found in Arabidopsis thaliana (Mouse-ear cress).